Here is a 101-residue protein sequence, read N- to C-terminus: Large ribosomal subunit protein uL24 (101 aa).

The protein belongs to the universal ribosomal protein uL24 family. As to quaternary structure, part of the 50S ribosomal subunit.

Functionally, one of two assembly initiator proteins, it binds directly to the 5'-end of the 23S rRNA, where it nucleates assembly of the 50S subunit. Its function is as follows. One of the proteins that surrounds the polypeptide exit tunnel on the outside of the subunit. This Borrelia hermsii (strain HS1 / DAH) protein is Large ribosomal subunit protein uL24.